Reading from the N-terminus, the 381-residue chain is MALKAKGAAALDCFEVTLKCEEGDDDDEAVVVAVIPRPEPMLRVTQQEKTPPPRPNLLEAGVEGCEELKQQVSWEQEFLVGNSPGGSGRALCMVCGAEIRSPSADTARAHILEQHPHTLDLSPSEKSNILEAWSEGVALLQDIQADQPSLPSLESGQDGQPDPISNPDPVRMPAEIVVLLDSEDNPSLPKRLRPRGLRPLELPVTPVIEQGNKKPRGQRWKESPENEPARKKRSRHMTKILDPDPDPPSPESPTETFAAPAEVRHFTDGSFPPGFVLQLFSHTQLRTTDCKDSSKDSRAAEGLPQPQNPSSASPPGLRGTLDLQVIRVRMEEPPAVSLLQDWSKHPQGTKGVGTGDKPDWPTVLSESSATVKGQPKAGSGV.

Residue Lys-49 forms a Glycyl lysine isopeptide (Lys-Gly) (interchain with G-Cter in SUMO2) linkage. Phosphoserine is present on residues Ser-122 and Ser-149. Residues 148 to 158 show a composition bias toward polar residues; that stretch reads PSLPSLESGQD. The disordered stretch occupies residues 148 to 170; it reads PSLPSLESGQDGQPDPISNPDPV. Glycyl lysine isopeptide (Lys-Gly) (interchain with G-Cter in SUMO2) cross-links involve residues Lys-190 and Lys-221. Disordered regions lie at residues 203–270, 285–320, and 335–381; these read PVTP…TDGS, LRTTDCKDSSKDSRAAEGLPQPQNPSSASPPGLRGT, and AVSL…GSGV. Residues 219-229 are compositionally biased toward basic and acidic residues; it reads RWKESPENEPA. Residues Ser-249 and Ser-252 each carry the phosphoserine modification. The span at 288-299 shows a compositional bias: basic and acidic residues; sequence TDCKDSSKDSRA. Residues Lys-291 and Lys-295 each participate in a glycyl lysine isopeptide (Lys-Gly) (interchain with G-Cter in SUMO2) cross-link. The segment covering 304 to 315 has biased composition (low complexity); that stretch reads PQPQNPSSASPP. Phosphoserine is present on residues Ser-310 and Ser-313.

Interacts with SPIN1, SPIN2A, SPIN2B, SPIN3 and SPIN4. Interacts with TCF7L2 in a SPIN1-dependent manner. Interacts with PARP1; promoting PARP1 ADP-ribosyltransferase activity.

It localises to the nucleus. It is found in the chromosome. In terms of biological role, chromatin protein that stabilizes SPIN1 and enhances its association with histone H3 trimethylated at both 'Lys-4' and 'Lys-9' (H3K4me3K9me3). Positively regulates poly-ADP-ribosylation in response to DNA damage; acts by facilitating PARP1 ADP-ribosyltransferase activity. The protein is Spindlin interactor and repressor of chromatin-binding protein of Mus musculus (Mouse).